The chain runs to 80 residues: Iota-conotoxin-like r11c (80 aa).

A signal peptide spans 1–19 (MKLCLTFLLVLMILASVTG). Residues 20 to 35 (EKSSKHTLSRAARVKN) constitute a propeptide that is removed on maturation. Pro-38 and Pro-47 each carry 4-hydroxyproline; partial. 4 disulfides stabilise this stretch: Cys-41–Cys-55, Cys-48–Cys-58, Cys-54–Cys-63, and Cys-57–Cys-72. Pro-65 carries the 4-hydroxyproline modification. Residue Leu-78 is modified to D-leucine. A propeptide (removed by a carboxypeptidase) is located at residue Arg-80.

The natural D-Leu form of the peptide is more potent than the synthetic L-Leu form. Expressed by the venom duct.

The protein resides in the secreted. Its function is as follows. Iota-conotoxins bind to voltage-gated sodium channels (Nav) and act as agonists by shifting the voltage-dependence of activation to more hyperpolarized levels. Causes circular motion, convulsions, copious urination, rigid paralysis and death upon intracranial injection into mice. Causes unbalanced swimming, swimming in diagonal and vertical motion and death, when injected intraperitoneally into goldfish. L-Leu and D-Leu forms are active on both nerve and muscle. This is Iota-conotoxin-like r11c from Conus radiatus (Rayed cone).